A 320-amino-acid polypeptide reads, in one-letter code: Beta-ketoacyl-[acyl-carrier-protein] synthase III (320 aa).

Residues C113 and H247 contribute to the active site. The ACP-binding stretch occupies residues 248–252 (QANRR). Residue N277 is part of the active site.

Belongs to the thiolase-like superfamily. FabH family. As to quaternary structure, homodimer.

The protein resides in the cytoplasm. It catalyses the reaction malonyl-[ACP] + acetyl-CoA + H(+) = 3-oxobutanoyl-[ACP] + CO2 + CoA. It functions in the pathway lipid metabolism; fatty acid biosynthesis. Its function is as follows. Catalyzes the condensation reaction of fatty acid synthesis by the addition to an acyl acceptor of two carbons from malonyl-ACP. Catalyzes the first condensation reaction which initiates fatty acid synthesis and may therefore play a role in governing the total rate of fatty acid production. Possesses both acetoacetyl-ACP synthase and acetyl transacylase activities. Its substrate specificity determines the biosynthesis of branched-chain and/or straight-chain of fatty acids. The protein is Beta-ketoacyl-[acyl-carrier-protein] synthase III of Acidiphilium cryptum (strain JF-5).